The following is a 296-amino-acid chain: tRNA pseudouridine synthase B (296 aa).

D38 (nucleophile) is an active-site residue.

This sequence belongs to the pseudouridine synthase TruB family. Type 1 subfamily.

The catalysed reaction is uridine(55) in tRNA = pseudouridine(55) in tRNA. In terms of biological role, responsible for synthesis of pseudouridine from uracil-55 in the psi GC loop of transfer RNAs. In Ehrlichia chaffeensis (strain ATCC CRL-10679 / Arkansas), this protein is tRNA pseudouridine synthase B.